We begin with the raw amino-acid sequence, 545 residues long: MAIMKKFIHHSLKQLIKPNLTSTKRVVSTSPRKEQGVAAISLEPSEMAQCPFRKSIDTFTETTNAVKAPGMTEVQPFERIPGPKGLPIVGTLFDYFKKDGPKFSKMFEVYRQRALEFGNIYYEKVGHFHCVVISSPGEYSRLVHAERQYPNRREMVPIAYYRKQKGFDLGVVNSQGEEWYRQRTVVSKKMLKLAEVSNFSTQMGEVSDDFVKRLSHVRDSHGEIPALERELFKWAMESIGTFLFEERIGCLGQETSPMAQTFIANLEGFFKTLQPLMYNLPTYKLWSTKLWKQFENYSDNVIDIGRSLVEKKWHPCKMEVTQNLHLISYLVNNGSMSTKEVTGLIVDLMLAAVETTSSATVWCLYNLAKNPQVQEKLFQEITEAQAKNNGTISAEDLCKLPMVKAVVKETLRLYPITYSTSRNIAEDMELGGYTIPAGTHVQANLYGMYRDPSLFPEPEGILPERWLRMNGSQMDATIKSTSQLVWGHGARMCLGRRIAEQEMHITLSKIIQNFTLSYNHDDVEPILNTMLTPDRPVRIEFKPRQ.

A heme-binding site is contributed by Cys493.

This sequence belongs to the cytochrome P450 family. Heme is required as a cofactor. In terms of tissue distribution, abundantly expressed in the female gonadotropic hormone producing dorsal bodies.

Its function is as follows. May be involved in the synthesis of the female gonadotropic hormone produced by the dorsal bodies. This chain is Cytochrome P450 10 (CYP10), found in Lymnaea stagnalis (Great pond snail).